The primary structure comprises 180 residues: MQNPQNLIWIDLEMTGLDPDRDVIIEMATIVTDSDLNTLAEGPVIAIHQPEEVLAGMDEWNTRQHGQSGLTQRVRESTVSMAEAEAQTLAFLEQWVPKRSSPICGNSICQDRRFLYRHMPRLEGYFHYRNLDVSTLKELAARWAPQVRESFKKGNTHLALDDIRESIAELRHYRDHFIKL.

Residues 7–170 enclose the Exonuclease domain; sequence LIWIDLEMTG…DDIRESIAEL (164 aa). The active site involves Tyr-128.

This sequence belongs to the oligoribonuclease family.

It is found in the cytoplasm. Functionally, 3'-to-5' exoribonuclease specific for small oligoribonucleotides. This is Oligoribonuclease from Pseudomonas paraeruginosa (strain DSM 24068 / PA7) (Pseudomonas aeruginosa (strain PA7)).